The sequence spans 432 residues: Keratin, type I cytoskeletal 17 (432 aa).

The segment at 1–24 is disordered; that stretch reads MTTSIRQFTSSSSIKGSSGLGGGS. Residues 1-83 form a head region; that stretch reads MTTSIRQFTS…GGVDGLLAGG (83 aa). 2 positions are modified to phosphoserine: Ser12 and Ser13. Lys15 participates in a covalent cross-link: Glycyl lysine isopeptide (Lys-Gly) (interchain with G-Cter in SUMO1); alternate. Lys15 is covalently cross-linked (Glycyl lysine isopeptide (Lys-Gly) (interchain with G-Cter in SUMO2); alternate). 3 positions are modified to phosphoserine: Ser25, Ser32, and Ser39. Ser44 bears the Phosphoserine; by RPS6KA1 mark. The interval 84–120 is coil 1A; that stretch reads EKATMQNLNDRLASYLDKVRALEEANTELEVKIRDWY. The IF rod domain occupies 84-395; sequence EKATMQNLND…RLLEGEDAHL (312 aa). The segment at 102-116 is peptide epitope S1; induces T-cell and keratinocyte proliferation and IFN-gamma production; it reads VRALEEANTELEVKI. Thr110 bears the Phosphothreonine mark. Residues 121 to 138 are linker 1; that stretch reads QRQAPGPARDYSQYYRTI. The coil 1B stretch occupies residues 139–230; that stretch reads EELQNKILTA…NHEEEMNALR (92 aa). A peptide epitope S2; induces T-cell proliferation and IFN-gamma production region spans residues 153 to 167; the sequence is ANILLQIDNARLAAD. Residues 231–250 form a linker 12 region; sequence GQVGGEINVEMDAAPGVDLS. Residues 251–392 are coil 2; sequence RILNEMRDQY…TYRRLLEGED (142 aa). Lys278 participates in a covalent cross-link: Glycyl lysine isopeptide (Lys-Gly) (interchain with G-Cter in SUMO2). Thr279 carries the post-translational modification Phosphothreonine. Ser323 is modified (phosphoserine). A peptide epitope S4; induces T-cell and keratinocyte proliferation and IFN-gamma production region spans residues 332 to 346; sequence ENRYCVQLSQIQGLI. Positions 393–432 are tail; it reads AHLTQYKKEPVTTRQVRTIVEEVQDGKVISSREQVHQTTR. Glycyl lysine isopeptide (Lys-Gly) (interchain with G-Cter in SUMO1); alternate cross-links involve residues Lys399, Lys400, and Lys419. Glycyl lysine isopeptide (Lys-Gly) (interchain with G-Cter in SUMO2); alternate cross-links involve residues Lys399, Lys400, and Lys419.

It belongs to the intermediate filament family. Heterodimer of a type I and a type II keratin. KRT17 associates with KRT6 isomers (KRT6A or KRT6B). Interacts with TRADD and SFN. Phosphorylation at Ser-44 occurs in a growth- and stress-dependent fashion in skin keratinocytes, it has no effect on filament organization. Expressed in the outer root sheath and medulla region of hair follicle specifically from eyebrow and beard, digital pulp, nail matrix and nail bed epithelium, mucosal stratified squamous epithelia and in basal cells of oral epithelium, palmoplantar epidermis and sweat and mammary glands. Also expressed in myoepithelium of prostate, basal layer of urinary bladder, cambial cells of sebaceous gland and in exocervix (at protein level).

The protein resides in the cytoplasm. In terms of biological role, type I keratin involved in the formation and maintenance of various skin appendages, specifically in determining shape and orientation of hair. Required for the correct growth of hair follicles, in particular for the persistence of the anagen (growth) state. Modulates the function of TNF-alpha in the specific context of hair cycling. Regulates protein synthesis and epithelial cell growth through binding to the adapter protein SFN and by stimulating Akt/mTOR pathway. Involved in tissue repair. May be a marker of basal cell differentiation in complex epithelia and therefore indicative of a certain type of epithelial 'stem cells'. Acts as a promoter of epithelial proliferation by acting a regulator of immune response in skin: promotes Th1/Th17-dominated immune environment contributing to the development of basaloid skin tumors. May act as an autoantigen in the immunopathogenesis of psoriasis, with certain peptide regions being a major target for autoreactive T-cells and hence causing their proliferation. The sequence is that of Keratin, type I cytoskeletal 17 (KRT17) from Homo sapiens (Human).